The chain runs to 547 residues: Probable bifunctional tRNA threonylcarbamoyladenosine biosynthesis protein (547 aa).

The tract at residues 1-329 is kae1; sequence MDTSKDLICI…YRSDMVEVNW (329 aa). Fe cation contacts are provided by His112, His116, and Tyr133. Residues 133–137, Asp165, Gly178, Glu182, and Asn262 contribute to the L-threonylcarbamoyladenylate site; that span reads YVSGG. Asp290 serves as a coordination point for Fe cation. The Protein kinase domain maps to 346–547; that stretch reads IIPEHLIGKG…KEVEKRARYL (202 aa). Residues 352-360 and Lys373 each bind ATP; that span reads IGKGAEADI. Asp465 functions as the Proton acceptor; for kinase activity in the catalytic mechanism.

This sequence in the N-terminal section; belongs to the KAE1 / TsaD family. The protein in the C-terminal section; belongs to the protein kinase superfamily. Tyr protein kinase family. BUD32 subfamily. In terms of assembly, component of the KEOPS complex that consists of Kae1, Bud32, Cgi121 and Pcc1; the whole complex dimerizes. Fe(2+) is required as a cofactor.

The protein localises to the cytoplasm. The catalysed reaction is L-seryl-[protein] + ATP = O-phospho-L-seryl-[protein] + ADP + H(+). The enzyme catalyses L-threonyl-[protein] + ATP = O-phospho-L-threonyl-[protein] + ADP + H(+). It catalyses the reaction L-threonylcarbamoyladenylate + adenosine(37) in tRNA = N(6)-L-threonylcarbamoyladenosine(37) in tRNA + AMP + H(+). Required for the formation of a threonylcarbamoyl group on adenosine at position 37 (t(6)A37) in tRNAs that read codons beginning with adenine. Is a component of the KEOPS complex that is probably involved in the transfer of the threonylcarbamoyl moiety of threonylcarbamoyl-AMP (TC-AMP) to the N6 group of A37. The Kae1 domain likely plays a direct catalytic role in this reaction. The Bud32 domain probably displays kinase activity that regulates Kae1 function. The polypeptide is Probable bifunctional tRNA threonylcarbamoyladenosine biosynthesis protein (Methanococcus maripaludis (strain C7 / ATCC BAA-1331)).